A 255-amino-acid polypeptide reads, in one-letter code: Microfibril-associated glycoprotein 4 (255 aa).

A signal peptide spans 1-21 (MKALLALPLLLLLSTPPCAPQ). Positions 26–28 (RGD) match the Cell attachment site motif. The Fibrinogen C-terminal domain maps to 32–255 (RFCLQQPLDC…KRTEMKIRRA (224 aa)). 2 N-linked (GlcNAc...) asparagine glycosylation sites follow: asparagine 87 and asparagine 137.

In terms of assembly, homodimer. Can also form higher oligomers. Interacts with FBN1, FBN2 and LOX. Interacts with COL1A1 in a Ca (2+)-dependent manner. Interacts with ELN in a Ca (2+)-dependent manner; this interaction promotes ELN self-assembly.

It localises to the secreted. The protein resides in the extracellular space. It is found in the extracellular matrix. Its function is as follows. Could be involved in calcium-dependent cell adhesion or intercellular interactions. May contribute to the elastic fiber assembly and/or maintenance. In Homo sapiens (Human), this protein is Microfibril-associated glycoprotein 4 (MFAP4).